A 61-amino-acid polypeptide reads, in one-letter code: Putative antitoxin VapB13 (61 aa).

This sequence belongs to the UPF0165 family.

Its function is as follows. Possibly the antitoxin component of a type II toxin-antitoxin (TA) system. Its cognate toxin is VapC13 (Potential). The protein is Putative antitoxin VapB13 (vapB13) of Archaeoglobus fulgidus (strain ATCC 49558 / DSM 4304 / JCM 9628 / NBRC 100126 / VC-16).